Here is a 394-residue protein sequence, read N- to C-terminus: Probable 6-phosphogluconolactonase ARB_02015 (394 aa).

An N-terminal signal peptide occupies residues M1–A21. An N-linked (GlcNAc...) asparagine glycan is attached at N51.

It belongs to the cycloisomerase 2 family.

It is found in the secreted. It catalyses the reaction 6-phospho-D-glucono-1,5-lactone + H2O = 6-phospho-D-gluconate + H(+). It participates in carbohydrate degradation; pentose phosphate pathway; D-ribulose 5-phosphate from D-glucose 6-phosphate (oxidative stage): step 2/3. Catalyzes the hydrolysis of 6-phosphogluconolactone to 6-phosphogluconate. The chain is Probable 6-phosphogluconolactonase ARB_02015 from Arthroderma benhamiae (strain ATCC MYA-4681 / CBS 112371) (Trichophyton mentagrophytes).